Here is a 905-residue protein sequence, read N- to C-terminus: Probable aromatic-L-amino-acid decarboxylase (905 aa).

The tract at residues 250-296 (YLNPIIKTPPHNERVPKMKTNISKTRKKKGKVSDASKDSRPSETKKE) is disordered. Residues 280 to 296 (KVSDASKDSRPSETKKE) are compositionally biased toward basic and acidic residues. Pyridoxal 5'-phosphate is bound by residues threonine 492 and serine 591. Lysine 648 is modified (N6-(pyridoxal phosphate)lysine). Residues 861-905 (HTAEYADPPGKSNKSPQVAAKGELPSAAPPSSRTPNSDISEKSDR) are disordered. Residues 889-898 (PPSSRTPNSD) are compositionally biased toward polar residues.

Belongs to the group II decarboxylase family. Homodimer. It depends on pyridoxal 5'-phosphate as a cofactor.

The catalysed reaction is L-dopa + H(+) = dopamine + CO2. It carries out the reaction 5-hydroxy-L-tryptophan + H(+) = serotonin + CO2. It participates in catecholamine biosynthesis; dopamine biosynthesis; dopamine from L-tyrosine: step 2/2. Its function is as follows. Catalyzes the decarboxylation of L-3,4-dihydroxyphenylalanine (DOPA) to dopamine, L-5-hydroxytryptophan to serotonin and L-tryptophan to tryptamine. The sequence is that of Probable aromatic-L-amino-acid decarboxylase (hdl-1) from Caenorhabditis elegans.